Here is a 185-residue protein sequence, read N- to C-terminus: Large ribosomal subunit protein uL5 (185 aa).

The protein belongs to the universal ribosomal protein uL5 family. Part of the 50S ribosomal subunit; part of the 5S rRNA/L5/L18/L25 subcomplex. Contacts the 5S rRNA and the P site tRNA. Forms a bridge to the 30S subunit in the 70S ribosome.

In terms of biological role, this is one of the proteins that bind and probably mediate the attachment of the 5S RNA into the large ribosomal subunit, where it forms part of the central protuberance. In the 70S ribosome it contacts protein S13 of the 30S subunit (bridge B1b), connecting the 2 subunits; this bridge is implicated in subunit movement. Contacts the P site tRNA; the 5S rRNA and some of its associated proteins might help stabilize positioning of ribosome-bound tRNAs. The polypeptide is Large ribosomal subunit protein uL5 (Rhodopseudomonas palustris (strain BisA53)).